The chain runs to 562 residues: Cytosolic Fe-S cluster assembly factor nar1 (562 aa).

Cys-20 contacts [4Fe-4S] cluster. The interval 28–47 (PKNESSNSQNPYEVTTEDKV) is disordered. Residues 29–40 (KNESSNSQNPYE) are compositionally biased toward polar residues. Residues Cys-62, Cys-65, Cys-68, Cys-214, and Cys-269 each coordinate [4Fe-4S] cluster. The segment at 439–462 (ARVPAASAGGNRRQPISRNSASAG) is disordered. Residues 452-462 (QPISRNSASAG) are compositionally biased toward polar residues. [4Fe-4S] cluster contacts are provided by Cys-475 and Cys-479. Disordered stretches follow at residues 492–513 (REAS…PTPH) and 541–562 (HSPS…IGLT). Residues 494 to 505 (ASTSTQSVTAVE) show a composition bias toward polar residues.

It belongs to the NARF family.

Component of the cytosolic Fe/S protein assembly machinery. Required for maturation of extramitochondrial Fe/S proteins. May play a role in the transfer of pre-assembled Fe/S clusters to target apoproteins. This chain is Cytosolic Fe-S cluster assembly factor nar1 (nar1), found in Aspergillus flavus (strain ATCC 200026 / FGSC A1120 / IAM 13836 / NRRL 3357 / JCM 12722 / SRRC 167).